The primary structure comprises 379 residues: MSGFLPFSRPAMGVEELAAVKEVLESGWITTGPKNQALEQAFCQLTGNQHAIAVSSATAGMHITLMALEIGKGDEVITPSLTWVSTLNMISLLGATPVMVDVDRDTLMVTPEAIEAAITPRTKAIIPVHYAGAPADIDAIRAIGERYGIAVIEDAAHAVGTYYKGRHIGAKGTAIFSFHAIKNITCAEGGLIVTDNENLARQLRMLKFHGLGVDAYDRHTWGRAPQAEVLTPGYKYNLTDINAAIALTQLVKLEHLNTRRREIAQQYQQALAALPFQPLSLPAWPHVHAWHLFIIRVDEQRCGISRDALMEALKERGIGTGLHFRAAHTQKYYRERFPTLSLPNTEWNSERICSLPLFPDMTTADADRVITALQQLAGQ.

An N6-(pyridoxal phosphate)lysine modification is found at Lys182.

It belongs to the DegT/DnrJ/EryC1 family. ArnB subfamily. Homodimer. The cofactor is pyridoxal 5'-phosphate.

It catalyses the reaction UDP-4-amino-4-deoxy-beta-L-arabinose + 2-oxoglutarate = UDP-beta-L-threo-pentopyranos-4-ulose + L-glutamate. Its pathway is nucleotide-sugar biosynthesis; UDP-4-deoxy-4-formamido-beta-L-arabinose biosynthesis; UDP-4-deoxy-4-formamido-beta-L-arabinose from UDP-alpha-D-glucuronate: step 2/3. The protein operates within bacterial outer membrane biogenesis; lipopolysaccharide biosynthesis. Catalyzes the conversion of UDP-4-keto-arabinose (UDP-Ara4O) to UDP-4-amino-4-deoxy-L-arabinose (UDP-L-Ara4N). The modified arabinose is attached to lipid A and is required for resistance to polymyxin and cationic antimicrobial peptides. The chain is UDP-4-amino-4-deoxy-L-arabinose--oxoglutarate aminotransferase from Escherichia coli O1:K1 / APEC.